Reading from the N-terminus, the 559-residue chain is Glucose-6-phosphate isomerase 2 (559 aa).

The Proton donor role is filled by Glu367. Active-site residues include His398 and Lys522.

This sequence belongs to the GPI family.

It is found in the cytoplasm. It catalyses the reaction alpha-D-glucose 6-phosphate = beta-D-fructose 6-phosphate. It participates in carbohydrate biosynthesis; gluconeogenesis. It functions in the pathway carbohydrate degradation; glycolysis; D-glyceraldehyde 3-phosphate and glycerone phosphate from D-glucose: step 2/4. Catalyzes the reversible isomerization of glucose-6-phosphate to fructose-6-phosphate. This is Glucose-6-phosphate isomerase 2 from Chromohalobacter salexigens (strain ATCC BAA-138 / DSM 3043 / CIP 106854 / NCIMB 13768 / 1H11).